The chain runs to 1306 residues: Angiotensin-converting enzyme (1306 aa).

The N-terminal stretch at 1 to 29 (MGAASGRRGPGLLLPLPLLLLLPPQPALA) is a signal peptide. Residues 30 to 1256 (LDPGLQPGNF…GLDLDAQQAR (1227 aa)) lie on the Extracellular side of the membrane. 9 N-linked (GlcNAc...) asparagine glycosylation sites follow: N38, N54, N74, E103, N111, I121, Y140, N146, and N160. Peptidase M2 domains lie at 40 to 624 (SADE…LGWP) and 643 to 1222 (VTDE…LGWP). A disulfide bond links C157 and C165. Y231 is a chloride binding site. N-linked (GlcNAc...) asparagine glycosylation is found at N318 and N368. Cysteines 359 and 377 form a disulfide. H390 is a binding site for Zn(2+). E391 functions as the Proton acceptor 1 in the catalytic mechanism. Residues H394, P414, E418, and R442 each coordinate Zn(2+). N-linked (GlcNAc...) asparagine glycosylation is found at N445 and N509. H520 serves as the catalytic Proton donor 1. Residue R529 participates in chloride binding. An intrachain disulfide couples C545 to C557. N-linked (GlcNAc...) asparagine glycosylation is found at N617 and N677. N-linked (GlcNAc...) (complex) asparagine glycans are attached at residues N695 and N714. The cysteines at positions 757 and 763 are disulfide-linked. N760 carries N-linked (GlcNAc...) asparagine; partial glycosylation. Chloride is bound by residues R791 and Y829. N942 is a glycosylation site (N-linked (GlcNAc...) asparagine; partial). C957 and C975 are joined by a disulfide. Residue H988 participates in Zn(2+) binding. E989 (proton acceptor 2) is an active-site residue. The Zn(2+) site is built by H992 and E1016. The chloride site is built by W1090 and R1094. H1118 (proton donor 2) is an active-site residue. A chloride-binding site is contributed by R1127. The cysteines at positions 1143 and 1155 are disulfide-linked. N-linked (GlcNAc...) asparagine; partial glycosylation occurs at N1191. Residues 1215 to 1256 (HGEKLGWPQYNWTPNSARSEGPLPDSGRVSFLGLDLDAQQAR) form a juxtamembrane stalk region. A helical transmembrane segment spans residues 1257–1277 (VGQWLLLFLGIALLVATLGLS). Over 1278 to 1306 (QRLFSIRHRSLHRHSHGPQFGSEVELRHS) the chain is Cytoplasmic. The residue at position 1299 (S1299) is a Phosphoserine.

The protein belongs to the peptidase M2 family. Monomer and homodimer; homodimerizes following binding to an inhibitor. Interacts with calmodulin (CALM1, CALM2 or CALM3); interaction takes place in the cytoplasmic region and regulates phosphorylation and proteolytic cleavage. Zn(2+) is required as a cofactor. Chloride serves as cofactor. In terms of processing, produced following proteolytic cleavage by secretase enzymes that cleave the transmembrane form in the juxtamembrane stalk region upstream of the transmembrane region. Cleavage can take place at different sites of the juxtamembrane stalk region. Post-translationally, phosphorylated by CK2 on Ser-1299; which allows membrane retention. Phosphorylated on tyrosine residues on its extracellular part, promoting cleavage by secretase enzymes and formation of the soluble form (Angiotensin-converting enzyme, soluble form). Ubiquitously expressed, with highest levels in lung, kidney, heart, gastrointestinal system and prostate. In terms of tissue distribution, specifically expressed in spermatocytes and adult testis.

It localises to the cell membrane. The protein resides in the cytoplasm. It is found in the secreted. It catalyses the reaction Release of a C-terminal dipeptide, oligopeptide-|-Xaa-Yaa, when Xaa is not Pro, and Yaa is neither Asp nor Glu. Thus, conversion of angiotensin I to angiotensin II, with increase in vasoconstrictor activity, but no action on angiotensin II.. It carries out the reaction angiotensin I + H2O = L-histidyl-L-leucine + angiotensin II. The catalysed reaction is bradykinin + H2O = L-Phe-L-Arg + bradykinin(1-7). The enzyme catalyses substance P + H2O = substance P(1-9) + L-Leu-L-Met-NH2. It catalyses the reaction substance P + H2O = substance P(1-8) + Gly-L-Leu-L-Met-NH2. It carries out the reaction substance P + H2O = L-Phe-L-Phe-Gly-L-Leu-L-Met-NH2 + substance P(1-6). The catalysed reaction is neurotensin + H2O = neurotensin(1-11) + L-isoleucyl-L-leucine. The enzyme catalyses goralatide + H2O = N-acetyl-L-seryl-L-aspartate + L-lysyl-L-proline. It catalyses the reaction Met-enkephalin + H2O = L-phenylalanyl-L-methionine + L-tyrosylglycylglycine. It carries out the reaction Leu-enkephalin + H2O = L-tyrosylglycylglycine + L-phenylalanyl-L-leucine. The catalysed reaction is Met-enkephalin-Arg-Phe + H2O = L-arginyl-L-phenylalanine + Met-enkephalin. Its activity is regulated as follows. The dipeptidyl carboxypeptidase activity is strongly activated by chloride. The dipeptidyl carboxypeptidase activity is specifically inhibited by lisinopril, captopril and enalaprilat. Strongly inhibited by lisinopril and captopril. In terms of biological role, dipeptidyl carboxypeptidase that removes dipeptides from the C-terminus of a variety of circulating hormones, such as angiotensin I, bradykinin or enkephalins, thereby playing a key role in the regulation of blood pressure, electrolyte homeostasis or synaptic plasticity. Composed of two similar catalytic domains, each possessing a functional active site, with different selectivity for substrates. Plays a major role in the angiotensin-renin system that regulates blood pressure and sodium retention by the kidney by converting angiotensin I to angiotensin II, resulting in an increase of the vasoconstrictor activity of angiotensin. Also able to inactivate bradykinin, a potent vasodilator, and therefore enhance the blood pressure response. Acts as a regulator of synaptic transmission by mediating cleavage of neuropeptide hormones, such as substance P, neurotensin or enkephalins. Catalyzes degradation of different enkephalin neuropeptides (Met-enkephalin, Leu-enkephalin, Met-enkephalin-Arg-Phe and possibly Met-enkephalin-Arg-Gly-Leu). Acts as a regulator of synaptic plasticity in the nucleus accumbens of the brain by mediating cleavage of Met-enkephalin-Arg-Phe, a strong ligand of Mu-type opioid receptor OPRM1, into Met-enkephalin. Met-enkephalin-Arg-Phe cleavage by ACE decreases activation of OPRM1, leading to long-term synaptic potentiation of glutamate release. Also acts as a regulator of hematopoietic stem cell differentiation by mediating degradation of hemoregulatory peptide N-acetyl-SDKP (AcSDKP). Acts as a regulator of cannabinoid signaling pathway by mediating degradation of hemopressin, an antagonist peptide of the cannabinoid receptor CNR1. Involved in amyloid-beta metabolism by catalyzing degradation of Amyloid-beta protein 40 and Amyloid-beta protein 42 peptides, thereby preventing plaque formation. Catalyzes cleavage of cholecystokinin (maturation of Cholecystokinin-8 and Cholecystokinin-5) and Gonadoliberin-1 (both maturation and degradation) hormones. Degradation of hemoregulatory peptide N-acetyl-SDKP (AcSDKP) and amyloid-beta proteins is mediated by the N-terminal catalytic domain, while angiotensin I and cholecystokinin cleavage is mediated by the C-terminal catalytic region. Its function is as follows. Soluble form that is released in blood plasma and other body fluids following proteolytic cleavage in the juxtamembrane stalk region. Isoform produced by alternative promoter usage that is specifically expressed in spermatocytes and adult testis, and which is required for male fertility. In contrast to somatic isoforms, only contains one catalytic domain. Acts as a dipeptidyl carboxypeptidase that removes dipeptides from the C-terminus of substrates. The identity of substrates that are needed for male fertility is unknown. May also have a glycosidase activity which releases GPI-anchored proteins from the membrane by cleaving the mannose linkage in the GPI moiety. The GPIase activity was reported to be essential for the egg-binding ability of the sperm. This activity is however unclear and has been challenged by other groups, suggesting that it may be indirect. The protein is Angiotensin-converting enzyme of Homo sapiens (Human).